Here is a 529-residue protein sequence, read N- to C-terminus: Probable bifunctional tRNA threonylcarbamoyladenosine biosynthesis protein (529 aa).

The kae1 stretch occupies residues 1–324; the sequence is MIVLGLEGTA…FRIDEVDAPW (324 aa). Fe cation is bound by residues His-107, His-111, and Tyr-128. L-threonylcarbamoyladenylate is bound by residues 128–132, Asp-160, Gly-173, Glu-177, and Asn-257; that span reads YVSGG. Asp-285 provides a ligand contact to Fe cation. The region spanning 329–529 is the Protein kinase domain; that stretch reads SRKDYGKAGA…SAIRRRHRYV (201 aa). Residues 335-342 and Lys-355 each bind ATP; that span reads KAGAESRI. Catalysis depends on Asp-447, which acts as the Proton acceptor; for kinase activity.

It in the N-terminal section; belongs to the KAE1 / TsaD family. This sequence in the C-terminal section; belongs to the protein kinase superfamily. Tyr protein kinase family. BUD32 subfamily. In terms of assembly, component of the KEOPS complex that consists of Kae1, Bud32, Cgi121 and Pcc1; the whole complex dimerizes. Fe(2+) is required as a cofactor.

The protein resides in the cytoplasm. It carries out the reaction L-seryl-[protein] + ATP = O-phospho-L-seryl-[protein] + ADP + H(+). The catalysed reaction is L-threonyl-[protein] + ATP = O-phospho-L-threonyl-[protein] + ADP + H(+). It catalyses the reaction L-threonylcarbamoyladenylate + adenosine(37) in tRNA = N(6)-L-threonylcarbamoyladenosine(37) in tRNA + AMP + H(+). Its function is as follows. Required for the formation of a threonylcarbamoyl group on adenosine at position 37 (t(6)A37) in tRNAs that read codons beginning with adenine. Is a component of the KEOPS complex that is probably involved in the transfer of the threonylcarbamoyl moiety of threonylcarbamoyl-AMP (TC-AMP) to the N6 group of A37. The Kae1 domain likely plays a direct catalytic role in this reaction. The Bud32 domain probably displays kinase activity that regulates Kae1 function. The sequence is that of Probable bifunctional tRNA threonylcarbamoyladenosine biosynthesis protein from Thermoplasma acidophilum (strain ATCC 25905 / DSM 1728 / JCM 9062 / NBRC 15155 / AMRC-C165).